The primary structure comprises 267 residues: Phosphate import ATP-binding protein PstB 1 (267 aa).

The 242-residue stretch at 21–262 (LETKDLHVYY…AALQSTSDYV (242 aa)) folds into the ABC transporter domain. Residue 53-60 (GPSGCGKS) coordinates ATP.

Belongs to the ABC transporter superfamily. Phosphate importer (TC 3.A.1.7) family. The complex is composed of two ATP-binding proteins (PstB), two transmembrane proteins (PstC and PstA) and a solute-binding protein (PstS).

The protein resides in the cell membrane. It catalyses the reaction phosphate(out) + ATP + H2O = ADP + 2 phosphate(in) + H(+). Its function is as follows. Part of the ABC transporter complex PstSACB involved in phosphate import. Responsible for energy coupling to the transport system. The sequence is that of Phosphate import ATP-binding protein PstB 1 from Streptococcus thermophilus (strain CNRZ 1066).